A 310-amino-acid chain; its full sequence is MDELIKEFDRYMDLERNLSTHTRKNYLSDLNQFKIYLEENHRVPTELKTEAWQNVDYMMVRAFLGALYRRRVKKVTIARKLASLRAFFKYLHQKRKIQCNPLEAVSTPRTEKYIPAVLSVDEIFVLLNLPFPEDVFGLRDRAILELFYSSGIRVSELTGINEEDMDFSQGLIRIRGKGKKERIVPIGQPASEAVQRYMMKKPGSETSGKAVATCPVPLFVNRRQGRLSARSVARILSKYVSMSGLQKQISPHTLRHSFATHLMDAGADLRSIQELLGHESLSTTQKYTAVSVNRLMAVYDRAHPKARGGH.

Positions 1 to 92 constitute a Core-binding (CB) domain; it reads MDELIKEFDR…SLRAFFKYLH (92 aa). Residues 113–300 enclose the Tyr recombinase domain; the sequence is YIPAVLSVDE…SVNRLMAVYD (188 aa). Active-site residues include R153, K177, H252, R255, and H278. The O-(3'-phospho-DNA)-tyrosine intermediate role is filled by Y287.

It belongs to the 'phage' integrase family. XerC subfamily. Forms a cyclic heterotetrameric complex composed of two molecules of XerC and two molecules of XerD.

Its subcellular location is the cytoplasm. Functionally, site-specific tyrosine recombinase, which acts by catalyzing the cutting and rejoining of the recombining DNA molecules. The XerC-XerD complex is essential to convert dimers of the bacterial chromosome into monomers to permit their segregation at cell division. It also contributes to the segregational stability of plasmids. The sequence is that of Tyrosine recombinase XerC from Syntrophus aciditrophicus (strain SB).